Consider the following 240-residue polypeptide: Large ribosomal subunit protein uL3 (240 aa).

Disordered stretches follow at residues 138-158 (SISHRSHGSTGGRQDPGKTFK) and 215-240 (EAPLPGKFRLANEGAEPAPATESAEG). At glutamine 151 the chain carries N5-methylglutamine.

This sequence belongs to the universal ribosomal protein uL3 family. In terms of assembly, part of the 50S ribosomal subunit. Forms a cluster with proteins L14 and L19. Methylated by PrmB.

One of the primary rRNA binding proteins, it binds directly near the 3'-end of the 23S rRNA, where it nucleates assembly of the 50S subunit. In Beijerinckia indica subsp. indica (strain ATCC 9039 / DSM 1715 / NCIMB 8712), this protein is Large ribosomal subunit protein uL3.